A 334-amino-acid chain; its full sequence is Aspartate carbamoyltransferase catalytic subunit (334 aa).

The carbamoyl phosphate site is built by Arg70 and Thr71. Lys98 is an L-aspartate binding site. Residues Arg120, His150, and Gln153 each coordinate carbamoyl phosphate. Arg183 and Arg239 together coordinate L-aspartate. 2 residues coordinate carbamoyl phosphate: Gly280 and Pro281.

It belongs to the aspartate/ornithine carbamoyltransferase superfamily. ATCase family. Heterododecamer (2C3:3R2) of six catalytic PyrB chains organized as two trimers (C3), and six regulatory PyrI chains organized as three dimers (R2).

It carries out the reaction carbamoyl phosphate + L-aspartate = N-carbamoyl-L-aspartate + phosphate + H(+). Its pathway is pyrimidine metabolism; UMP biosynthesis via de novo pathway; (S)-dihydroorotate from bicarbonate: step 2/3. Catalyzes the condensation of carbamoyl phosphate and aspartate to form carbamoyl aspartate and inorganic phosphate, the committed step in the de novo pyrimidine nucleotide biosynthesis pathway. In Pseudomonas aeruginosa (strain LESB58), this protein is Aspartate carbamoyltransferase catalytic subunit.